The following is a 330-amino-acid chain: DNA-directed RNA polymerase subunit alpha (330 aa).

The alpha N-terminal domain (alpha-NTD) stretch occupies residues 1–236 (MQGSVTEFLK…EQLDAFVDLR (236 aa)). Residues 250 to 330 (FDPILLRPVD…NWPPASIAED (81 aa)) form an alpha C-terminal domain (alpha-CTD) region.

Belongs to the RNA polymerase alpha chain family. In terms of assembly, homodimer. The RNAP catalytic core consists of 2 alpha, 1 beta, 1 beta' and 1 omega subunit. When a sigma factor is associated with the core the holoenzyme is formed, which can initiate transcription.

The catalysed reaction is RNA(n) + a ribonucleoside 5'-triphosphate = RNA(n+1) + diphosphate. Its function is as follows. DNA-dependent RNA polymerase catalyzes the transcription of DNA into RNA using the four ribonucleoside triphosphates as substrates. The protein is DNA-directed RNA polymerase subunit alpha of Vibrio cholerae serotype O1 (strain ATCC 39315 / El Tor Inaba N16961).